Consider the following 119-residue polypeptide: Holo-[acyl-carrier-protein] synthase (119 aa).

Mg(2+) is bound by residues aspartate 8 and glutamate 58.

Belongs to the P-Pant transferase superfamily. AcpS family. Mg(2+) serves as cofactor.

The protein localises to the cytoplasm. The catalysed reaction is apo-[ACP] + CoA = holo-[ACP] + adenosine 3',5'-bisphosphate + H(+). Its function is as follows. Transfers the 4'-phosphopantetheine moiety from coenzyme A to a Ser of acyl-carrier-protein. This chain is Holo-[acyl-carrier-protein] synthase, found in Bacillus cereus (strain ATCC 10987 / NRS 248).